A 339-amino-acid chain; its full sequence is MIELFFEYIFPLIIIALKVVAITIPLILCVAYLTYAERRVIGLMQLRRGPNVVGPFGLLQPIADAVKLLFKEPIIPTNADKILFVLAPMITFILSLIGWAVIPFAKGVVLADINVGVLYILAISSLSVYGIIIAGWASNSKYAFLGAIRSSAQMISYEVSMGLVIITVLLTTGTLNLSQIVEAQRTMPWWIDLMLMPMGVVFFISVLAETNRLPFDLPEAESELVAGYNVEYSSMGFALFFLGEYANMILVSAMTTTFFLGGYLPPFNISWLDCIPGFFWFVFKVGFLLFCFLWIRATLPRYRYDQLMRLGWKVFLPLTLFWVVLVSSVLIYTDHLPNV.

Transmembrane regions (helical) follow at residues 9–29 (IFPL…LILC), 50–70 (PNVV…KLLF), 82–102 (ILFV…WAVI), 115–135 (VGVL…IIAG), 161–181 (MGLV…SQIV), 187–207 (MPWW…ISVL), 235–255 (MGFA…SAMT), 275–295 (IPGF…FLWI), and 311–331 (GWKV…SVLI).

It belongs to the complex I subunit 1 family. In terms of assembly, NDH-1 is composed of 14 different subunits. Subunits NuoA, H, J, K, L, M, N constitute the membrane sector of the complex.

It is found in the cell inner membrane. The enzyme catalyses a quinone + NADH + 5 H(+)(in) = a quinol + NAD(+) + 4 H(+)(out). NDH-1 shuttles electrons from NADH, via FMN and iron-sulfur (Fe-S) centers, to quinones in the respiratory chain. The immediate electron acceptor for the enzyme in this species is believed to be ubiquinone. Couples the redox reaction to proton translocation (for every two electrons transferred, four hydrogen ions are translocated across the cytoplasmic membrane), and thus conserves the redox energy in a proton gradient. This subunit may bind ubiquinone. This is NADH-quinone oxidoreductase subunit H from Rickettsia bellii (strain RML369-C).